A 382-amino-acid chain; its full sequence is 8-amino-7-oxononanoate synthase (382 aa).

Arg26 contributes to the substrate binding site. 104-105 (GY) is a pyridoxal 5'-phosphate binding site. A substrate-binding site is contributed by His129. Residues Ser175, 200-203 (DEAH), and 232-235 (TLSK) each bind pyridoxal 5'-phosphate. An N6-(pyridoxal phosphate)lysine modification is found at Lys235. Residue Thr345 participates in substrate binding.

It belongs to the class-II pyridoxal-phosphate-dependent aminotransferase family. BioF subfamily. As to quaternary structure, homodimer. Pyridoxal 5'-phosphate serves as cofactor.

It carries out the reaction 6-carboxyhexanoyl-[ACP] + L-alanine + H(+) = (8S)-8-amino-7-oxononanoate + holo-[ACP] + CO2. It participates in cofactor biosynthesis; biotin biosynthesis. In terms of biological role, catalyzes the decarboxylative condensation of pimeloyl-[acyl-carrier protein] and L-alanine to produce 8-amino-7-oxononanoate (AON), [acyl-carrier protein], and carbon dioxide. The chain is 8-amino-7-oxononanoate synthase from Mycobacterium sp. (strain KMS).